An 804-amino-acid chain; its full sequence is DNA mismatch repair protein MutS (804 aa).

614–621 (GPNMAGKS) contacts ATP.

It belongs to the DNA mismatch repair MutS family.

In terms of biological role, this protein is involved in the repair of mismatches in DNA. It is possible that it carries out the mismatch recognition step. This protein has a weak ATPase activity. The polypeptide is DNA mismatch repair protein MutS (Ehrlichia ruminantium (strain Welgevonden)).